Here is a 201-residue protein sequence, read N- to C-terminus: Small ribosomal subunit protein uS4c (201 aa).

A disordered region spans residues 15–44; the sequence is LGALPGLTNKRPRAGSDLRNQSRSGKKSQY. The S4 RNA-binding domain occupies 89-150; the sequence is MRLDNILFRL…EQKSKVLIQN (62 aa).

The protein belongs to the universal ribosomal protein uS4 family. Part of the 30S ribosomal subunit. Contacts protein S5. The interaction surface between S4 and S5 is involved in control of translational fidelity.

It is found in the plastid. It localises to the chloroplast. Its function is as follows. One of the primary rRNA binding proteins, it binds directly to 16S rRNA where it nucleates assembly of the body of the 30S subunit. In terms of biological role, with S5 and S12 plays an important role in translational accuracy. This chain is Small ribosomal subunit protein uS4c (rps4), found in Lactuca sativa (Garden lettuce).